Reading from the N-terminus, the 555-residue chain is Bicyclo-germacrene synthase (555 aa).

Residues aspartate 311 and glutamate 315 each contribute to the Mg(2+) site. The DDXXD motif signature appears at aspartate 311–glutamate 315. 2 homodimerization regions span residues tyrosine 316–leucine 322 and glutamate 392–glycine 429. Mg(2+) is bound by residues aspartate 459 and glutamate 467.

It belongs to the terpene synthase family. As to quaternary structure, homodimer. It depends on Mn(2+) as a cofactor. Mg(2+) serves as cofactor. Expressed in peltate glandular trichomes. Present at low levels in flowers, leaves and stems.

It carries out the reaction (2E,6E)-farnesyl diphosphate = bicyclogermacrene + diphosphate. It catalyses the reaction (2E)-geranyl diphosphate = terpinolene + diphosphate. The enzyme catalyses (2E)-geranyl diphosphate = (4R)-limonene + diphosphate. The catalysed reaction is (2E)-geranyl diphosphate + H2O = (2E)-geraniol + diphosphate. It carries out the reaction (2E,6E)-farnesyl diphosphate = allo-aromadendrene + diphosphate. It participates in secondary metabolite biosynthesis; terpenoid biosynthesis. Functionally, involved in the biosynthesis of phenolic sesquiterpenes natural products. Sesquiterpene synthase converting (2E,6E)-farnesyl diphosphate (FPP) to alloaromadendrene and bicyclo-germacrene. The product formation is dependent on the metal ions present and in presence of manganese, bicyclo-germacrene is greatly favored while both alloaromadendrene and bicyclo-germacrene are produced in equivalent amounts in the presence of magnesium. Can also convert geranyl diphosphate (GPP) to terpinolene, limonene and geraniol, and this conversion is not affected by the presence of magnesium or manganese. The chain is Bicyclo-germacrene synthase (TPS4) from Origanum vulgare (Wild marjoram).